The primary structure comprises 708 residues: Ubiquitin thioesterase ZRANB1 (708 aa).

The segment at 3-33 adopts a RanBP2-type 1 zinc-finger fold; the sequence is ERGIKWACEYCTYENWPSAIKCTMCRAQRPS. Residues Cys10, Cys13, Cys24, and Cys27 each coordinate Zn(2+). Positions 38 to 73 are disordered; it reads TEDPFKSGSSDVGRDWDPSSTEGGSSPLICPDSSAR. 2 RanBP2-type zinc fingers span residues 84 to 113 and 149 to 178; these read NANK…QRRT and RTQH…PRPN. Zn(2+) contacts are provided by Cys90, Cys93, Cys104, Cys107, Cys155, Cys158, Cys169, and Cys172. The interval 200–225 is disordered; it reads RARWRGSCSSGNSQRRSPPATKRDSE. Positions 206 to 215 are enriched in polar residues; the sequence is SCSSGNSQRR. 2 ANK repeats span residues 260 to 290 and 313 to 340; these read KKTD…SGGD and YTLV…QQAA. The TRAF-binding stretch occupies residues 392 to 641; sequence PTVQEKLFDE…LSAQELGNEE (250 aa). An OTU domain is found at 432 to 592; the sequence is LYALWNRTAG…RGHFSALVAM (161 aa). The Nucleophile role is filled by Cys443. His585 (proton acceptor) is an active-site residue.

This sequence belongs to the peptidase C64 family. Interacts with TRAF6. Interacts with APC. As to expression, widely expressed.

It localises to the cytoplasm. Its subcellular location is the nucleus. The enzyme catalyses Thiol-dependent hydrolysis of ester, thioester, amide, peptide and isopeptide bonds formed by the C-terminal Gly of ubiquitin (a 76-residue protein attached to proteins as an intracellular targeting signal).. In terms of biological role, ubiquitin thioesterase, which specifically hydrolyzes 'Lys-29'-linked and 'Lys-33'-linked diubiquitin. Also cleaves 'Lys-63'-linked chains, but with 40-fold less efficiency compared to 'Lys-29'-linked ones. Positive regulator of the Wnt signaling pathway that deubiquitinates APC protein, a negative regulator of Wnt-mediated transcription. Acts as a regulator of autophagy by mediating deubiquitination of PIK3C3/VPS34, thereby promoting autophagosome maturation. Plays a role in the regulation of cell morphology and cytoskeletal organization. Required in the stress fiber dynamics and cell migration. This Homo sapiens (Human) protein is Ubiquitin thioesterase ZRANB1.